A 296-amino-acid chain; its full sequence is Bifunctional protein FolD (296 aa).

NADP(+) contacts are provided by residues 166 to 168 (GRS), S195, and T236.

The protein belongs to the tetrahydrofolate dehydrogenase/cyclohydrolase family. As to quaternary structure, homodimer.

It catalyses the reaction (6R)-5,10-methylene-5,6,7,8-tetrahydrofolate + NADP(+) = (6R)-5,10-methenyltetrahydrofolate + NADPH. The catalysed reaction is (6R)-5,10-methenyltetrahydrofolate + H2O = (6R)-10-formyltetrahydrofolate + H(+). It participates in one-carbon metabolism; tetrahydrofolate interconversion. Catalyzes the oxidation of 5,10-methylenetetrahydrofolate to 5,10-methenyltetrahydrofolate and then the hydrolysis of 5,10-methenyltetrahydrofolate to 10-formyltetrahydrofolate. The sequence is that of Bifunctional protein FolD from Dehalococcoides mccartyi (strain CBDB1).